A 91-amino-acid chain; its full sequence is Small ribosomal subunit protein uS15 (91 aa).

Belongs to the universal ribosomal protein uS15 family. In terms of assembly, part of the 30S ribosomal subunit. Forms a bridge to the 50S subunit in the 70S ribosome, contacting the 23S rRNA.

Functionally, one of the primary rRNA binding proteins, it binds directly to 16S rRNA where it helps nucleate assembly of the platform of the 30S subunit by binding and bridging several RNA helices of the 16S rRNA. In terms of biological role, forms an intersubunit bridge (bridge B4) with the 23S rRNA of the 50S subunit in the ribosome. The sequence is that of Small ribosomal subunit protein uS15 from Hydrogenobaculum sp. (strain Y04AAS1).